A 298-amino-acid polypeptide reads, in one-letter code: Nucleotide-binding protein GTNG_3015 (298 aa).

ATP is bound at residue 17–24 (GMSGAGKT). 68–71 (DLRS) provides a ligand contact to GTP.

It belongs to the RapZ-like family.

Its function is as follows. Displays ATPase and GTPase activities. This chain is Nucleotide-binding protein GTNG_3015, found in Geobacillus thermodenitrificans (strain NG80-2).